Here is a 245-residue protein sequence, read N- to C-terminus: tRNA (guanine-N(1)-)-methyltransferase (245 aa).

S-adenosyl-L-methionine contacts are provided by residues G111 and 131 to 136; that span reads MGDYVL.

The protein belongs to the RNA methyltransferase TrmD family. In terms of assembly, homodimer.

The protein localises to the cytoplasm. The catalysed reaction is guanosine(37) in tRNA + S-adenosyl-L-methionine = N(1)-methylguanosine(37) in tRNA + S-adenosyl-L-homocysteine + H(+). Its function is as follows. Specifically methylates guanosine-37 in various tRNAs. This chain is tRNA (guanine-N(1)-)-methyltransferase, found in Staphylococcus aureus (strain MRSA252).